The following is an 888-amino-acid chain: Alanine--tRNA ligase (888 aa).

4 residues coordinate Zn(2+): His-571, His-575, Cys-674, and His-678.

Belongs to the class-II aminoacyl-tRNA synthetase family. The cofactor is Zn(2+).

The protein resides in the cytoplasm. It catalyses the reaction tRNA(Ala) + L-alanine + ATP = L-alanyl-tRNA(Ala) + AMP + diphosphate. Catalyzes the attachment of alanine to tRNA(Ala) in a two-step reaction: alanine is first activated by ATP to form Ala-AMP and then transferred to the acceptor end of tRNA(Ala). Also edits incorrectly charged Ser-tRNA(Ala) and Gly-tRNA(Ala) via its editing domain. This Nocardia farcinica (strain IFM 10152) protein is Alanine--tRNA ligase.